Here is a 166-residue protein sequence, read N- to C-terminus: NADPH-dependent 7-cyano-7-deazaguanine reductase (166 aa).

The active-site Thioimide intermediate is C57. D64 (proton donor) is an active-site residue. Residues V79–S81 and H98–E99 contribute to the substrate site.

This sequence belongs to the GTP cyclohydrolase I family. QueF type 1 subfamily.

The protein resides in the cytoplasm. The catalysed reaction is 7-aminomethyl-7-carbaguanine + 2 NADP(+) = 7-cyano-7-deazaguanine + 2 NADPH + 3 H(+). It participates in tRNA modification; tRNA-queuosine biosynthesis. Catalyzes the NADPH-dependent reduction of 7-cyano-7-deazaguanine (preQ0) to 7-aminomethyl-7-deazaguanine (preQ1). In Staphylococcus aureus (strain MRSA252), this protein is NADPH-dependent 7-cyano-7-deazaguanine reductase.